The primary structure comprises 399 residues: Succinate--CoA ligase [ADP-forming] subunit beta (399 aa).

Residues 9–254 form the ATP-grasp domain; that stretch reads KAVLQPFGVS…TTEEDAKEIE (246 aa). ATP-binding positions include Lys-46, 53-55, Glu-109, Ser-112, and Glu-117; that span reads GRG. Residues Asn-209 and Asp-223 each coordinate Mg(2+). Residues Asn-274 and 331–333 contribute to the substrate site; that span reads GIM.

Belongs to the succinate/malate CoA ligase beta subunit family. As to quaternary structure, heterotetramer of two alpha and two beta subunits. The cofactor is Mg(2+).

It carries out the reaction succinate + ATP + CoA = succinyl-CoA + ADP + phosphate. The catalysed reaction is GTP + succinate + CoA = succinyl-CoA + GDP + phosphate. The protein operates within carbohydrate metabolism; tricarboxylic acid cycle; succinate from succinyl-CoA (ligase route): step 1/1. In terms of biological role, succinyl-CoA synthetase functions in the citric acid cycle (TCA), coupling the hydrolysis of succinyl-CoA to the synthesis of either ATP or GTP and thus represents the only step of substrate-level phosphorylation in the TCA. The beta subunit provides nucleotide specificity of the enzyme and binds the substrate succinate, while the binding sites for coenzyme A and phosphate are found in the alpha subunit. The sequence is that of Succinate--CoA ligase [ADP-forming] subunit beta from Rhodopseudomonas palustris (strain BisA53).